The following is a 217-amino-acid chain: UPF0502 protein PFLU_2135 (217 aa).

It belongs to the UPF0502 family.

This chain is UPF0502 protein PFLU_2135, found in Pseudomonas fluorescens (strain SBW25).